The following is a 453-amino-acid chain: Probable glycine dehydrogenase (decarboxylating) subunit 1 (453 aa).

It belongs to the GcvP family. N-terminal subunit subfamily. As to quaternary structure, the glycine cleavage system is composed of four proteins: P, T, L and H. In this organism, the P 'protein' is a heterodimer of two subunits.

The catalysed reaction is N(6)-[(R)-lipoyl]-L-lysyl-[glycine-cleavage complex H protein] + glycine + H(+) = N(6)-[(R)-S(8)-aminomethyldihydrolipoyl]-L-lysyl-[glycine-cleavage complex H protein] + CO2. The glycine cleavage system catalyzes the degradation of glycine. The P protein binds the alpha-amino group of glycine through its pyridoxal phosphate cofactor; CO(2) is released and the remaining methylamine moiety is then transferred to the lipoamide cofactor of the H protein. This Erythrobacter litoralis (strain HTCC2594) protein is Probable glycine dehydrogenase (decarboxylating) subunit 1.